We begin with the raw amino-acid sequence, 290 residues long: Acetylglutamate kinase (290 aa).

Substrate is bound by residues 64–65 (GG), Arg-86, and Asn-183.

The protein belongs to the acetylglutamate kinase family. ArgB subfamily.

It localises to the cytoplasm. The catalysed reaction is N-acetyl-L-glutamate + ATP = N-acetyl-L-glutamyl 5-phosphate + ADP. It participates in amino-acid biosynthesis; L-arginine biosynthesis; N(2)-acetyl-L-ornithine from L-glutamate: step 2/4. Its function is as follows. Catalyzes the ATP-dependent phosphorylation of N-acetyl-L-glutamate. This is Acetylglutamate kinase from Halothermothrix orenii (strain H 168 / OCM 544 / DSM 9562).